The following is a 397-amino-acid chain: Translocase of chloroplast 34 homolog, chloroplastic (397 aa).

The disordered stretch occupies residues 1 to 72 (MAQPPRPAEE…SQPWAGLNRL (72 aa)). 2 stretches are compositionally biased toward acidic residues: residues 10–32 (EYDDDVQEDEDELKEGELDDDES) and 44–63 (AGDEEAEDDEQDEEDGDEDS). In terms of domain architecture, AIG1-type G spans 90–321 (RKQLTVLLLG…YKYHPRLSSK (232 aa)). Residues 99-106 (GKSSVGKS) are G1. GTP is bound by residues 102–107 (SVGKSS) and 121–126 (QAFKLQ). A Mg(2+)-binding site is contributed by serine 106. Positions 121–124 (QAFK) are homodimerization. The segment at 126-130 (QADTD) is G2. The tract at residues 155–158 (DTCG) is G3. The segment at 193–198 (RLDLYR) is homodimerization. The interval 227–230 (THAN) is G4. Residues histidine 228 and 271-272 (EN) each bind GTP. The interval 271 to 273 (ENS) is G5. The chain crosses the membrane as a helical span at residues 329–349 (LLPVAIAAEVLFYRRFLHPRL). The AKR2A-binding sequence (ABS) required for chloroplast outer envelope membrane targeting signature appears at 350-358 (DDNQRRVER).

Belongs to the TRAFAC class TrmE-Era-EngA-EngB-Septin-like GTPase superfamily. AIG1/Toc34/Toc159-like paraseptin GTPase family. TOC34 subfamily. Homodimer, heterodimer with other TOC proteins, and monomer. Part of the TOC core complex that includes 1 protein for the specific recognition of transit peptides surrounded by a ring composed of four proteins forming translocation channels, and four to five GTP-binding proteins providing energy. This core complex can interact with components of the TIC complex to form a larger import complex. Interacts with ARSA1. Mg(2+) is required as a cofactor.

The protein resides in the plastid. It is found in the chloroplast outer membrane. Its function is as follows. GTPase involved in protein precursor import into chloroplasts. Seems to recognize chloroplast-destined precursor proteins and regulate their presentation to the translocation channel through GTP hydrolysis. Functions as an essential component of the outer chloroplast membrane translocon (TOC) complex, which, in turn, catalyzes the import of nucleus-encoded precursor polypeptides from the cytoplasm to the chloroplast. This is Translocase of chloroplast 34 homolog, chloroplastic from Chlamydomonas reinhardtii (Chlamydomonas smithii).